Here is a 554-residue protein sequence, read N- to C-terminus: 3-(3-hydroxy-phenyl)propionate/3-hydroxycinnamic acid hydroxylase (554 aa).

FAD-binding positions include 17-46 and 285-295; these read QVAI…VVEK and FRIDRVLLAGD.

This sequence belongs to the PheA/TfdB FAD monooxygenase family. The cofactor is FAD.

The catalysed reaction is 3-(3-hydroxyphenyl)propanoate + NADH + O2 + H(+) = 3-(2,3-dihydroxyphenyl)propanoate + NAD(+) + H2O. It catalyses the reaction (2E)-3-(3-hydroxyphenyl)prop-2-enoate + NADH + O2 + H(+) = (2E)-3-(2,3-dihydroxyphenyl)prop-2-enoate + NAD(+) + H2O. It participates in aromatic compound metabolism; 3-phenylpropanoate degradation. Functionally, catalyzes the insertion of one atom of molecular oxygen into position 2 of the phenyl ring of 3-(3-hydroxyphenyl)propionate (3-HPP) and hydroxycinnamic acid (3HCI). The protein is 3-(3-hydroxy-phenyl)propionate/3-hydroxycinnamic acid hydroxylase of Escherichia coli O81 (strain ED1a).